A 594-amino-acid polypeptide reads, in one-letter code: Protein wntless (594 aa).

Residues 1–13 (MSGTILENLSGRK) are Cytoplasmic-facing. The chain crosses the membrane as a helical span at residues 14–34 (LSILVATLLLCQVLCFLLGGL). Topologically, residues 35–239 (YAPLPAGHVT…AIHQNGGFTQ (205 aa)) are lumenal. Asn-58 carries an N-linked (GlcNAc...) asparagine glycan. The helical transmembrane segment at 240 to 260 (IWLLLKTMLFPFVVGIMIWFW) threads the bilayer. Residues 261–270 (RRVHLLQRSP) lie on the Cytoplasmic side of the membrane. The chain crosses the membrane as a helical span at residues 271–291 (ALLEYMLIYLGAALTFLNLPL). Topologically, residues 292–311 (EYLSLVYEMPYMLLLSDIRQ) are lumenal. A helical transmembrane segment spans residues 312–332 (GIFYAMLLTFWLVFAGEHMLI). Residues 333 to 344 (QDAPNKSTIRSR) lie on the Cytoplasmic side of the membrane. The chain crosses the membrane as a helical span at residues 345 to 365 (YWKHLSAVVVGCISLFVFDIC). The Lumenal segment spans residues 366-390 (ERGVQLRNPFYSIWTTPLGAKVAMT). The helical transmembrane segment at 391–411 (FIVLAGVSAAIYFLFLCYMIW) threads the bilayer. Residues 412 to 473 (KVFRNIGDKR…ANESKGLIYR (62 aa)) lie on the Cytoplasmic side of the membrane. A helical membrane pass occupies residues 474–494 (FKFLMLATLVCAALTVAGFIM). Topologically, residues 495 to 514 (GQMAEGQWDWNDNVAIQPTS) are lumenal. A helical membrane pass occupies residues 515 to 535 (AFLTGVYGMWNIYIFALLILY). The Cytoplasmic portion of the chain corresponds to 536 to 594 (APSHKQWPTMHHSDETTQSNENIVASAASEEIEFSHLPSDSNPSEISSLTSFTRKVAFD). The interval 571–594 (HLPSDSNPSEISSLTSFTRKVAFD) is disordered. Residues 573–588 (PSDSNPSEISSLTSFT) show a composition bias toward polar residues.

This sequence belongs to the wntless family. In terms of assembly, interacts with wg; in the Golgi. Interacts with Vps35, a component of the retromer complex; wls stability is regulated by Vps35. In terms of tissue distribution, ubiquitously expressed in the wing imaginal disk, increased expression is observed in a stripe at the dorso-ventral boundary and other regions of the wing disk that express wg. Also expresses in the leg imaginal disk. During larval development, expression is seen in both motorneurons and muscle.

Its subcellular location is the presynaptic cell membrane. The protein resides in the postsynaptic cell membrane. The protein localises to the cell membrane. It is found in the endosome membrane. It localises to the endoplasmic reticulum membrane. Its subcellular location is the golgi apparatus membrane. A segment polarity gene required for wingless (wg)-dependent patterning processes, acting in both wg-sending cells and wg-target cells. In non-neuronal cells wls directs wg secretion. The wls traffic loop encompasses the Golgi, the cell surface, an endocytic compartment and a retrograde route leading back to the Golgi, and involves clathrin-mediated endocytosis and the retromer complex (a conserved protein complex consisting of Vps35 and Vps26). In neuronal cells (the larval motorneuron NMJ), the wg signal moves across the synapse via the release of wls-containing exosome-like vesicles. Postsynaptic wls is required for the trafficking of fz2 through the fz2-interacting protein Grip. This is Protein wntless from Drosophila melanogaster (Fruit fly).